The chain runs to 292 residues: NIF3-like protein 1 (292 aa).

Belongs to the GTP cyclohydrolase I type 2/NIF3 family.

This is NIF3-like protein 1 (anon-35F/36A) from Drosophila melanogaster (Fruit fly).